Here is a 57-residue protein sequence, read N- to C-terminus: Protein translocase subunit SecE (57 aa).

The chain crosses the membrane as a helical span at residues 33–53 (GLGILLVGFIGFVIFSIMTFV).

Belongs to the SecE/SEC61-gamma family. As to quaternary structure, component of the Sec protein translocase complex. Heterotrimer consisting of SecY (alpha), SecG (beta) and SecE (gamma) subunits. The heterotrimers can form oligomers, although 1 heterotrimer is thought to be able to translocate proteins. Interacts with the ribosome. May interact with SecDF, and other proteins may be involved.

Its subcellular location is the cell membrane. Its function is as follows. Essential subunit of the Sec protein translocation channel SecYEG. Clamps together the 2 halves of SecY. May contact the channel plug during translocation. In Natronomonas pharaonis (strain ATCC 35678 / DSM 2160 / CIP 103997 / JCM 8858 / NBRC 14720 / NCIMB 2260 / Gabara) (Halobacterium pharaonis), this protein is Protein translocase subunit SecE.